We begin with the raw amino-acid sequence, 555 residues long: Glutamate--tRNA ligase (555 aa).

Positions 100–110 (PNPSGPLHIGH) match the 'HIGH' region motif.

The protein belongs to the class-I aminoacyl-tRNA synthetase family. Glutamate--tRNA ligase type 2 subfamily.

It is found in the cytoplasm. The catalysed reaction is tRNA(Glu) + L-glutamate + ATP = L-glutamyl-tRNA(Glu) + AMP + diphosphate. Catalyzes the attachment of glutamate to tRNA(Glu) in a two-step reaction: glutamate is first activated by ATP to form Glu-AMP and then transferred to the acceptor end of tRNA(Glu). The sequence is that of Glutamate--tRNA ligase from Methanococcus maripaludis (strain C7 / ATCC BAA-1331).